A 465-amino-acid chain; its full sequence is D-ornithine/D-lysine decarboxylase (465 aa).

At K80 the chain carries N6-(pyridoxal phosphate)lysine. Residues G259 and 307–310 (EPGR) contribute to the pyridoxal 5'-phosphate site. C387 functions as the Proton donor in the catalytic mechanism. A pyridoxal 5'-phosphate-binding site is contributed by Y422.

This sequence belongs to the Orn/Lys/Arg decarboxylase class-II family. In terms of assembly, homodimer. The cofactor is pyridoxal 5'-phosphate.

It carries out the reaction D-ornithine + H(+) = putrescine + CO2. The catalysed reaction is D-lysine + H(+) = cadaverine + CO2. Its function is as follows. Catalyzes the decarboxylation of D-ornithine and D-lysine. Ornithine is likely the physiological substrate. Has no detectable diaminopimelate decarboxylase activity in vitro. The sequence is that of D-ornithine/D-lysine decarboxylase from Salmonella typhimurium (strain LT2 / SGSC1412 / ATCC 700720).